The following is a 336-amino-acid chain: tRNA-splicing endonuclease (336 aa).

Active-site residues include Tyr271, His282, and Lys313.

The protein belongs to the tRNA-intron endonuclease family. Archaeal long subfamily. Homodimer.

The catalysed reaction is pretRNA = a 3'-half-tRNA molecule with a 5'-OH end + a 5'-half-tRNA molecule with a 2',3'-cyclic phosphate end + an intron with a 2',3'-cyclic phosphate and a 5'-hydroxyl terminus.. Functionally, endonuclease that removes tRNA introns. Cleaves pre-tRNA at the 5'- and 3'-splice sites to release the intron. The products are an intron and two tRNA half-molecules bearing 2',3' cyclic phosphate and 5'-OH termini. Recognizes a pseudosymmetric substrate in which 2 bulged loops of 3 bases are separated by a stem of 4 bp. This Natronomonas pharaonis (strain ATCC 35678 / DSM 2160 / CIP 103997 / JCM 8858 / NBRC 14720 / NCIMB 2260 / Gabara) (Halobacterium pharaonis) protein is tRNA-splicing endonuclease.